Reading from the N-terminus, the 696-residue chain is Carotenoid dioxygenase carX (696 aa).

Polar residues predominate over residues 1–16 (MKFLQQNSFTQTSMSQ). Positions 1-27 (MKFLQQNSFTQTSMSQPHEDVSPPLRH) are disordered. H244, H298, H361, and H642 together coordinate Fe(2+).

The protein belongs to the carotenoid oxygenase family. The cofactor is Fe(2+).

The enzyme catalyses all-trans-beta-carotene + O2 = 2 all-trans-retinal. It functions in the pathway carotenoid biosynthesis. Its function is as follows. Carotenoid dioxygenase; part of the car gene cluster that mediates the biosynthesis of neurosporaxanthin, a carboxylic apocarotenoid acting as an essential protective pigments and leading to orange pigmentation. CarX mediates the cleavage of beta-carotene produced by carAR into retinal, the rhodopsin's chromophore that is involved in the regulation of the carotenoid biosynthetic pathway via a negative feedback mechanism. It can also convert the synthetic compound beta-apo-8'-carotenal but not C35-apocarotenoids such as the acidic apocarotenoid neurosporaxanthin (C35), as well as its corresponding aldehyde beta-apo-4'-carotenal. The protein is Carotenoid dioxygenase carX of Gibberella fujikuroi (strain CBS 195.34 / IMI 58289 / NRRL A-6831) (Bakanae and foot rot disease fungus).